The primary structure comprises 590 residues: Keratin, type II cytoskeletal 5 (590 aa).

Over residues 1–18 the composition is skewed to low complexity; it reads MSRQSSVSFRSGGSRSFS. The interval 1–20 is disordered; the sequence is MSRQSSVSFRSGGSRSFSTA. The tract at residues 1 to 167 is head; the sequence is MSRQSSVSFR…DPSIQRVRTE (167 aa). Ser-5, Ser-8, Ser-16, and Ser-21 each carry phosphoserine. At Thr-24 the chain carries Phosphothreonine; by CDK1. Ser-26, Ser-36, Ser-50, Ser-64, Ser-71, Ser-75, and Ser-82 each carry phosphoserine. Position 151 is a phosphothreonine; by CDK1 (Thr-151). Positions 168 to 203 are coil 1A; the sequence is EREQIKTLNNKFASFIDKVRFLEQQNKVLDTKWTLL. In terms of domain architecture, IF rod spans 168 to 481; sequence EREQIKTLNN…KLLEGEECRL (314 aa). Positions 204-222 are linker 1; the sequence is QEQGTKTVRQNLEPLFEQY. Residues 223–315 form a coil 1B region; the sequence is INNLRRQLDS…FFDAELSQMQ (93 aa). The tract at residues 316–338 is linker 12; sequence THVSDTSVVLSMDNNRNLDLDSI. Residues 339-477 form a coil 2 region; that stretch reads IAEVKAQYEE…ATYRKLLEGE (139 aa). A tail region spans residues 478-590; that stretch reads ECRLSGEGVG…TSSSRKSFKS (113 aa). The interval 566–590 is disordered; sequence GSGGGSSSSVKFVSTTSSSRKSFKS. The segment covering 572–590 has biased composition (low complexity); that stretch reads SSSVKFVSTTSSSRKSFKS.

This sequence belongs to the intermediate filament family. In terms of assembly, heterodimer of a type I and a type II keratin. Heterodimer with type I keratin KRT25 leading to the formation of keratin intermediate filament (KIF) network. Forms a heterodimer (via 2B domains) with KRT14 (via 2B domains). Interacts with PLEC isoform 1C, when in a heterodimer with KRT14. Interacts with TCHP. Interacts with EPPK1. Interacts with AMELX. Interacts with PKP1 (via N-terminus) and PKP2. In terms of processing, phosphorylated by CDK1, AURKB and Rho-kinase, phosphorylation is regulated by the cell cycle. Thr-24 phosphorylation, mediated by CDK1, peaks during prometaphase or metaphase cells with phosphorylated filamentous structures evident throughout the cytoplasm during early mitosis. CDK1 phosphorylates Thr-24 in mitotic cells at the site of injury. Post-translationally, O-glycosylated. As to expression, expressed in corneal epithelium (at protein level). Expressed in keratinocytes (at protein level).

The protein localises to the cytoplasm. Functionally, required for the formation of keratin intermediate filaments in the basal epidermis and maintenance of the skin barrier in response to mechanical stress. Regulates the recruitment of Langerhans cells to the epidermis, potentially by modulation of the abundance of macrophage chemotactic cytokines, macrophage inflammatory cytokines and CTNND1 localization in keratinocytes. This chain is Keratin, type II cytoskeletal 5 (KRT5), found in Homo sapiens (Human).